The sequence spans 275 residues: Large ribosomal subunit protein uL2 (275 aa).

Disordered regions lie at residues 36 to 55 (PKKR…RHKG) and 223 to 275 (VVMN…RHAR).

Belongs to the universal ribosomal protein uL2 family. In terms of assembly, part of the 50S ribosomal subunit. Forms a bridge to the 30S subunit in the 70S ribosome.

Its function is as follows. One of the primary rRNA binding proteins. Required for association of the 30S and 50S subunits to form the 70S ribosome, for tRNA binding and peptide bond formation. It has been suggested to have peptidyltransferase activity; this is somewhat controversial. Makes several contacts with the 16S rRNA in the 70S ribosome. In Thiobacillus denitrificans (strain ATCC 25259 / T1), this protein is Large ribosomal subunit protein uL2.